We begin with the raw amino-acid sequence, 179 residues long: Large ribosomal subunit protein uL5 (179 aa).

It belongs to the universal ribosomal protein uL5 family. In terms of assembly, part of the 50S ribosomal subunit; part of the 5S rRNA/L5/L18/L25 subcomplex. Contacts the 5S rRNA and the P site tRNA. Forms a bridge to the 30S subunit in the 70S ribosome.

This is one of the proteins that bind and probably mediate the attachment of the 5S RNA into the large ribosomal subunit, where it forms part of the central protuberance. In the 70S ribosome it contacts protein S13 of the 30S subunit (bridge B1b), connecting the 2 subunits; this bridge is implicated in subunit movement. Contacts the P site tRNA; the 5S rRNA and some of its associated proteins might help stabilize positioning of ribosome-bound tRNAs. This Natranaerobius thermophilus (strain ATCC BAA-1301 / DSM 18059 / JW/NM-WN-LF) protein is Large ribosomal subunit protein uL5.